The primary structure comprises 1066 residues: E3 ubiquitin-protein ligase RNF31 (1066 aa).

Residues 1–479 (MPGDEERGFL…PEKQRQDKMR (479 aa)) form a polyubiquitin-binding region. The region spanning 70-141 (TLSTALNILE…SFPEGQEEPD (72 aa)) is the PUB domain. Positions 251–287 (LRQALPGSHQTASLSSSLPASSQPRPPSSSLALGDSS) are disordered. Positions 262–287 (ASLSSSLPASSQPRPPSSSLALGDSS) are enriched in low complexity. 2 consecutive RanBP2-type zinc fingers follow at residues 293 to 325 (PANA…PKGC) and 344 to 373 (ARDQ…PRLA). Position 377 is a phosphoserine (Ser377). The RanBP2-type 3 zinc-finger motif lies at 403 to 432 (QPQVWYCDHCTFCNSGPVWVCAMCNRTRDP). The tract at residues 434–478 (PTQPALQSYPSSLEKGRPKPGSSQHLGSSLPASCGDPEKQRQDKM) is disordered. Polar residues predominate over residues 454–464 (GSSQHLGSSLP). The segment covering 469–478 (DPEKQRQDKM) has biased composition (basic and acidic residues). The interval 557-610 (GNLDEAVEECVRARRRKVHELQSLGFGPKEGSLQALFQHGGDVARALTELQRQR) is interaction with RBCK1. A UBA domain is found at 558-609 (NLDEAVEECVRARRRKVHELQSLGFGPKEGSLQALFQHGGDVARALTELQRQ). The interval 689 to 923 (LAQECAVCGW…KSLHGHHPRD (235 aa)) is TRIAD supradomain. Positions 693, 696, 711, 713, 716, 719, 738, 741, 793, 796, 811, 814, 819, 822, 830, 835, 865, and 868 each coordinate Zn(2+). An RING-type 1 zinc finger spans residues 693–743 (CAVCGWALPRNRMQALISCECTICPECFRQHFTIALKEKHITDMVCPACGR). An IBR-type zinc finger spans residues 773–835 (ALFHKKLTEA…WEEQHRGRSC (63 aa)). The RING-type 2; atypical zinc finger occupies 865-895 (CPKCKFSYALARGGCMHFHCTQCRHQFCSGC). Cys879 is an active-site residue. Cys884, Cys887, Cys892, Cys895, Cys910, and His919 together coordinate Zn(2+). Positions 904-1066 (KCPDPNCKVK…LGQSIARRRK (163 aa)) are LDD domain.

This sequence belongs to the RBR family. As to quaternary structure, component of the LUBAC complex (linear ubiquitin chain assembly complex) which consists of SHARPIN, RBCK1 and RNF31. LUBAC has a MW of approximately 600 kDa suggesting a heteromultimeric assembly of its subunits. Associates with the TNF-R1 signaling complex (TNF-RSC) in a stimulation-dependent manner. Interacts (via the PUB domain) with OTULIN (via the PIM motif); the interaction is direct. Interacts (via the PUB domain) with VCP (via the PIM motif). Interacts (via the PUB domain) with SPATA2 (via the PIM motif); interaction is direct and bridges RNF31 and CYLD. Interacts with CYLD; the interaction is indirect and is mediated via SPATA2. Interacts with MUSK. Interacts with CARD11, promoting linear ubiquitination of BCL10. In terms of processing, autoubiquitinated. Interaction with OTULIN is required to suppress formation of 'Met-1'-linked polyubiquitin chains and prevent subsequent inactivation of the LUBAC complex. Post-translationally, cleaved by caspase during apoptosis. Widely expressed (at protein level). Not expressed in heart.

The protein resides in the cytoplasm. The catalysed reaction is [E2 ubiquitin-conjugating enzyme]-S-ubiquitinyl-L-cysteine + [acceptor protein]-L-lysine = [E2 ubiquitin-conjugating enzyme]-L-cysteine + [acceptor protein]-N(6)-ubiquitinyl-L-lysine.. Its pathway is protein modification; protein ubiquitination. E3 ubiquitin-protein ligase component of the LUBAC complex which conjugates linear ('Met-1'-linked) polyubiquitin chains to substrates and plays a key role in NF-kappa-B activation and regulation of inflammation. LUBAC conjugates linear polyubiquitin to IKBKG and RIPK1 and is involved in activation of the canonical NF-kappa-B and the JNK signaling pathways. Linear ubiquitination mediated by the LUBAC complex interferes with TNF-induced cell death and thereby prevents inflammation. LUBAC is recruited to the TNF-R1 signaling complex (TNF-RSC) following polyubiquitination of TNF-RSC components by BIRC2 and/or BIRC3 and to conjugate linear polyubiquitin to IKBKG and possibly other components contributing to the stability of the complex. The LUBAC complex is also involved in innate immunity by conjugating linear polyubiquitin chains at the surface of bacteria invading the cytosol to form the ubiquitin coat surrounding bacteria. LUBAC is not able to initiate formation of the bacterial ubiquitin coat, and can only promote formation of linear polyubiquitins on pre-existing ubiquitin. Recruited to the surface of bacteria by RNF213, which initiates the bacterial ubiquitin coat. The bacterial ubiquitin coat acts as an 'eat-me' signal for xenophagy and promotes NF-kappa-B activation. Together with OTULIN, the LUBAC complex regulates the canonical Wnt signaling during angiogenesis. RNF31 is required for linear ubiquitination of BCL10, thereby promoting TCR-induced NF-kappa-B activation. Binds polyubiquitin of different linkage types. This is E3 ubiquitin-protein ligase RNF31 from Mus musculus (Mouse).